A 514-amino-acid chain; its full sequence is Cobyric acid synthase (514 aa).

One can recognise a GATase cobBQ-type domain in the interval 258-458; sequence ALMVGVVRLP…IHGIFDNDGL (201 aa). The active-site Nucleophile is C339. H450 is a catalytic residue.

It belongs to the CobB/CobQ family. CobQ subfamily.

It functions in the pathway cofactor biosynthesis; adenosylcobalamin biosynthesis. Its function is as follows. Catalyzes amidations at positions B, D, E, and G on adenosylcobyrinic A,C-diamide. NH(2) groups are provided by glutamine, and one molecule of ATP is hydrogenolyzed for each amidation. The polypeptide is Cobyric acid synthase (Syntrophobacter fumaroxidans (strain DSM 10017 / MPOB)).